A 451-amino-acid chain; its full sequence is UPF0210 protein LMHCC_2097 (451 aa).

This sequence belongs to the UPF0210 family. Homodimer.

This Listeria monocytogenes serotype 4a (strain HCC23) protein is UPF0210 protein LMHCC_2097.